The following is a 338-amino-acid chain: Fructose-1,6-bisphosphatase class 1 (338 aa).

Residues glutamate 92, aspartate 115, leucine 117, and aspartate 118 each coordinate Mg(2+). Substrate contacts are provided by residues 118 to 121 (DGSS), asparagine 211, tyrosine 244, 262 to 264 (YLY), and lysine 274. Glutamate 280 lines the Mg(2+) pocket.

It belongs to the FBPase class 1 family. As to quaternary structure, homotetramer. Mg(2+) serves as cofactor.

The protein resides in the cytoplasm. The enzyme catalyses beta-D-fructose 1,6-bisphosphate + H2O = beta-D-fructose 6-phosphate + phosphate. It participates in carbohydrate biosynthesis; gluconeogenesis. The protein is Fructose-1,6-bisphosphatase class 1 of Vibrio vulnificus (strain YJ016).